The primary structure comprises 122 residues: Small ribosomal subunit protein uS13 (122 aa).

The interval 95 to 122 (GLPVRGQRTHTNARTRKGPAKPIAGKKK) is disordered.

This sequence belongs to the universal ribosomal protein uS13 family. In terms of assembly, part of the 30S ribosomal subunit. Forms a loose heterodimer with protein S19. Forms two bridges to the 50S subunit in the 70S ribosome.

Located at the top of the head of the 30S subunit, it contacts several helices of the 16S rRNA. In the 70S ribosome it contacts the 23S rRNA (bridge B1a) and protein L5 of the 50S subunit (bridge B1b), connecting the 2 subunits; these bridges are implicated in subunit movement. Contacts the tRNAs in the A and P-sites. The polypeptide is Small ribosomal subunit protein uS13 (Caulobacter sp. (strain K31)).